Here is a 1004-residue protein sequence, read N- to C-terminus: Glutamate [NMDA] receptor subunit 1 (1004 aa).

The signal sequence occupies residues 1–39 (MAGTDSPAAARFVYRCLLFAPAIVVGLLLPLTLPPIAAA). Over 40 to 585 (QRHTASDNPS…TLVSFLQPFS (546 aa)) the chain is Extracellular. N-linked (GlcNAc...) asparagine glycosylation is found at Asn-270, Asn-326, Asn-357, Asn-409, Asn-466, Asn-493, and Asn-513. Glycine contacts are provided by residues 542–544 (PLT) and Arg-549. A helical membrane pass occupies residues 586–606 (NTLWILVMVSVHVVALVLYLL). Residues 607-663 (DRFSPFGRFKLSHSDSNEEKALNLSSAVWFAWGVLLNSGIGEGTPRSFSARVLGMVW) are Cytoplasmic-facing. The chain crosses the membrane as a helical span at residues 664–684 (AGFAMIIVASYTANLAAFLVL). Topologically, residues 685–843 (ERPKTKLSGI…KTPNTLGLKN (159 aa)) are extracellular. Residue Asn-705 is glycosylated (N-linked (GlcNAc...) asparagine). Residues Ser-715 and Asp-759 each coordinate glycine. A helical membrane pass occupies residues 844–864 (MAGVFILVGVGIAGGVGLIII). Topologically, residues 865-1004 (EVIYKKHQVK…YTSDVSHLVV (140 aa)) are cytoplasmic. Residues 980–1004 (TRPQQNILPPRYSPGYTSDVSHLVV) form a disordered region. The span at 994 to 1004 (GYTSDVSHLVV) shows a compositional bias: polar residues.

It belongs to the glutamate-gated ion channel (TC 1.A.10.1) family. In terms of assembly, forms a heteromeric NMDA channel with Nmdar2.

Its subcellular location is the cell membrane. It is found in the postsynaptic cell membrane. It localises to the postsynaptic density. In terms of biological role, NMDA receptor subtype of glutamate-gated ion channels with high calcium permeability and voltage-dependent sensitivity to magnesium. Mediated by glycine. This protein plays a key role in synaptic plasticity, synaptogenesis, excitotoxicity, memory acquisition and learning. It mediates neuronal functions in glutamate neurotransmission. Is involved in the cell surface targeting of NMDA receptors. Plays a role in associative learning and in long-term memory consolidation. The chain is Glutamate [NMDA] receptor subunit 1 from Drosophila pseudoobscura pseudoobscura (Fruit fly).